The primary structure comprises 454 residues: tRNA(Ile)-lysidine synthase (454 aa).

31–36 provides a ligand contact to ATP; the sequence is SGGADS.

Belongs to the tRNA(Ile)-lysidine synthase family.

It is found in the cytoplasm. The catalysed reaction is cytidine(34) in tRNA(Ile2) + L-lysine + ATP = lysidine(34) in tRNA(Ile2) + AMP + diphosphate + H(+). In terms of biological role, ligates lysine onto the cytidine present at position 34 of the AUA codon-specific tRNA(Ile) that contains the anticodon CAU, in an ATP-dependent manner. Cytidine is converted to lysidine, thus changing the amino acid specificity of the tRNA from methionine to isoleucine. The chain is tRNA(Ile)-lysidine synthase from Porphyromonas gingivalis (strain ATCC BAA-308 / W83).